The chain runs to 229 residues: Interleukin-22 receptor subunit alpha-2 (229 aa).

An N-terminal signal peptide occupies residues 1-19 (MPKHCFLGLLIMLLTTATE). Fibronectin type-III domains follow at residues 28–127 (KPQK…TKLD) and 128–229 (PPVV…VQIP). Residue Asn54 is glycosylated (N-linked (GlcNAc...) asparagine). Intrachain disulfides connect Cys76–Cys84 and Cys204–Cys225.

This sequence belongs to the type II cytokine receptor family.

It localises to the secreted. Receptor for IL22. Binds to IL22, prevents interaction with the functional IL-22R complex and blocks the activity of IL22 (in vitro). May play an important role as an IL22 antagonist in the regulation of inflammatory responses. The sequence is that of Interleukin-22 receptor subunit alpha-2 (Il22ra2) from Rattus norvegicus (Rat).